Here is a 361-residue protein sequence, read N- to C-terminus: Phospho-N-acetylmuramoyl-pentapeptide-transferase (361 aa).

Helical transmembrane passes span 27–47, 72–92, 94–114, 133–153, 169–189, 200–220, 237–257, 264–284, 289–309, and 338–358; these read GAIVTAVLFVFLFGPGIISTL, TPTMGGLMIFSGLIVATLLWA, LSNLYVWVVLFVTTGFGLIGF, ARLAIEALIAGIAVVLMINAG, LLLDLGWFFVVFGAFVIVAAG, GLAIVPVMIAAASFGMISYLS, VGELAVICGAIIGAGLGFLWF, IFMGDTGSLALGGLLGSIAVA, IVLAVIGGLFVLEAVSVIVQV, and QVVIRFWIIAVVLALLGLATL.

The protein belongs to the glycosyltransferase 4 family. MraY subfamily. Mg(2+) serves as cofactor.

The protein resides in the cell inner membrane. It carries out the reaction UDP-N-acetyl-alpha-D-muramoyl-L-alanyl-gamma-D-glutamyl-meso-2,6-diaminopimeloyl-D-alanyl-D-alanine + di-trans,octa-cis-undecaprenyl phosphate = di-trans,octa-cis-undecaprenyl diphospho-N-acetyl-alpha-D-muramoyl-L-alanyl-D-glutamyl-meso-2,6-diaminopimeloyl-D-alanyl-D-alanine + UMP. It functions in the pathway cell wall biogenesis; peptidoglycan biosynthesis. Catalyzes the initial step of the lipid cycle reactions in the biosynthesis of the cell wall peptidoglycan: transfers peptidoglycan precursor phospho-MurNAc-pentapeptide from UDP-MurNAc-pentapeptide onto the lipid carrier undecaprenyl phosphate, yielding undecaprenyl-pyrophosphoryl-MurNAc-pentapeptide, known as lipid I. The sequence is that of Phospho-N-acetylmuramoyl-pentapeptide-transferase from Azorhizobium caulinodans (strain ATCC 43989 / DSM 5975 / JCM 20966 / LMG 6465 / NBRC 14845 / NCIMB 13405 / ORS 571).